A 704-amino-acid polypeptide reads, in one-letter code: Low calcium response locus protein D (704 aa).

The next 7 helical transmembrane spans lie at 18-35, 42-61, 108-132, 200-220, 235-259, 278-297, and 304-320; these read IMLAVLLLAVVFMMVLPL, ILIAVNMTISVVLLMIAIYI, FVVGGNLIVGIVIFLIITIVQFLVI, AIAGLIIIFVNILGGVTIGVT, ILTVGDGMVSQVPALLIAITAGIIV, VVAQPKAMLIGGVLLLLFGL, and VTFLILALLVGCGGYML.

This sequence belongs to the FHIPEP (flagella/HR/invasion proteins export pore) family.

The protein localises to the cell inner membrane. Could be involved in the secretion of the yop virulence proteins. This chain is Low calcium response locus protein D (lcrD), found in Yersinia pestis.